Consider the following 124-residue polypeptide: Small ribosomal subunit protein uS13 (124 aa).

The disordered stretch occupies residues 95-124; sequence GLPVRGQRTKTNARTRKGPKRTIAGKKKAR.

It belongs to the universal ribosomal protein uS13 family. Part of the 30S ribosomal subunit. Forms a loose heterodimer with protein S19. Forms two bridges to the 50S subunit in the 70S ribosome.

Its function is as follows. Located at the top of the head of the 30S subunit, it contacts several helices of the 16S rRNA. In the 70S ribosome it contacts the 23S rRNA (bridge B1a) and protein L5 of the 50S subunit (bridge B1b), connecting the 2 subunits; these bridges are implicated in subunit movement. Contacts the tRNAs in the A and P-sites. The chain is Small ribosomal subunit protein uS13 from Mycobacterium avium (strain 104).